A 93-amino-acid polypeptide reads, in one-letter code: Aspartyl/glutamyl-tRNA(Asn/Gln) amidotransferase subunit C (93 aa).

The protein belongs to the GatC family. As to quaternary structure, heterotrimer of A, B and C subunits.

The enzyme catalyses L-glutamyl-tRNA(Gln) + L-glutamine + ATP + H2O = L-glutaminyl-tRNA(Gln) + L-glutamate + ADP + phosphate + H(+). The catalysed reaction is L-aspartyl-tRNA(Asn) + L-glutamine + ATP + H2O = L-asparaginyl-tRNA(Asn) + L-glutamate + ADP + phosphate + 2 H(+). Its function is as follows. Allows the formation of correctly charged Asn-tRNA(Asn) or Gln-tRNA(Gln) through the transamidation of misacylated Asp-tRNA(Asn) or Glu-tRNA(Gln) in organisms which lack either or both of asparaginyl-tRNA or glutaminyl-tRNA synthetases. The reaction takes place in the presence of glutamine and ATP through an activated phospho-Asp-tRNA(Asn) or phospho-Glu-tRNA(Gln). In Rubrobacter xylanophilus (strain DSM 9941 / JCM 11954 / NBRC 16129 / PRD-1), this protein is Aspartyl/glutamyl-tRNA(Asn/Gln) amidotransferase subunit C.